Consider the following 900-residue polypeptide: Bifunctional uridylyltransferase/uridylyl-removing enzyme (900 aa).

Residues 1–342 (MPQVDPELFD…PCEQPVQIQP (342 aa)) are uridylyltransferase. Residues 343–705 (LNSRFQLRDG…TTQREFESGS (363 aa)) are uridylyl-removing. One can recognise an HD domain in the interval 461-583 (VDAHTLNLIK…VGDQTHLDYL (123 aa)). ACT domains are found at residues 706–789 (QIFI…IIQR) and 816–891 (VLEV…DNGR).

The protein belongs to the GlnD family. The cofactor is Mg(2+).

The catalysed reaction is [protein-PII]-L-tyrosine + UTP = [protein-PII]-uridylyl-L-tyrosine + diphosphate. It catalyses the reaction [protein-PII]-uridylyl-L-tyrosine + H2O = [protein-PII]-L-tyrosine + UMP + H(+). With respect to regulation, uridylyltransferase (UTase) activity is inhibited by glutamine, while glutamine activates uridylyl-removing (UR) activity. Its function is as follows. Modifies, by uridylylation and deuridylylation, the PII regulatory proteins (GlnB and homologs), in response to the nitrogen status of the cell that GlnD senses through the glutamine level. Under low glutamine levels, catalyzes the conversion of the PII proteins and UTP to PII-UMP and PPi, while under higher glutamine levels, GlnD hydrolyzes PII-UMP to PII and UMP (deuridylylation). Thus, controls uridylylation state and activity of the PII proteins, and plays an important role in the regulation of nitrogen assimilation and metabolism. This chain is Bifunctional uridylyltransferase/uridylyl-removing enzyme, found in Pseudomonas aeruginosa (strain UCBPP-PA14).